The chain runs to 238 residues: MLRFAVTLFAVITSSTCKKYSCLEGETHKLKPSPEPNMQECTLYSESSCCYANFTEQLAHSPVIKINNSYWNRCGQLSKSCEDFTKKIECFYRCSPHAAHWIHPNYTAGIQSVPLCQSFCDDWYEACKDDSACVRNWLMDWEWDESGVNHCKNECIPYSEMYVNGTDMCQSMWGESFKVSESSCLCLQMNKKDMMAIKYLLSESSEESSSVSSSEERACQKKLLKFEKLKEEEGGETR.

An N-terminal signal peptide occupies residues 1–17 (MLRFAVTLFAVITSSTC). Disulfide bonds link Cys-22-Cys-49, Cys-41-Cys-90, Cys-50-Cys-94, Cys-74-Cys-155, Cys-81-Cys-127, Cys-116-Cys-186, Cys-120-Cys-169, Cys-133-Cys-151, and Cys-184-Cys-219. N-linked (GlcNAc...) asparagine glycosylation is found at Asn-53, Asn-67, and Asn-105. Asn-164 carries an N-linked (GlcNAc...) asparagine glycan. 8 positions are modified to phosphoserine: Ser-204, Ser-205, Ser-208, Ser-209, Ser-210, Ser-212, Ser-213, and Ser-214.

Belongs to the folate receptor family. Post-translationally, N-glycosylated. Expressed in egg yolk and egg white (at protein level).

Its function is as follows. Required for the transport of riboflavin to the developing oocyte. This chain is Riboflavin-binding protein, found in Dromaius novaehollandiae (Emu).